The sequence spans 337 residues: Tetraacyldisaccharide 4'-kinase (337 aa).

58 to 65 serves as a coordination point for ATP; it reads TVGGSGKT.

The protein belongs to the LpxK family.

The catalysed reaction is a lipid A disaccharide + ATP = a lipid IVA + ADP + H(+). The protein operates within glycolipid biosynthesis; lipid IV(A) biosynthesis; lipid IV(A) from (3R)-3-hydroxytetradecanoyl-[acyl-carrier-protein] and UDP-N-acetyl-alpha-D-glucosamine: step 6/6. Its function is as follows. Transfers the gamma-phosphate of ATP to the 4'-position of a tetraacyldisaccharide 1-phosphate intermediate (termed DS-1-P) to form tetraacyldisaccharide 1,4'-bis-phosphate (lipid IVA). This is Tetraacyldisaccharide 4'-kinase from Shewanella putrefaciens (strain CN-32 / ATCC BAA-453).